Reading from the N-terminus, the 359-residue chain is Peptide chain release factor 1 (359 aa).

An N5-methylglutamine modification is found at glutamine 235. The tract at residues 285–305 (KRDSEISQMRKSQIGSGDRSE) is disordered. Polar residues predominate over residues 290–299 (ISQMRKSQIG).

The protein belongs to the prokaryotic/mitochondrial release factor family. Methylated by PrmC. Methylation increases the termination efficiency of RF1.

The protein resides in the cytoplasm. Functionally, peptide chain release factor 1 directs the termination of translation in response to the peptide chain termination codons UAG and UAA. The polypeptide is Peptide chain release factor 1 (Ehrlichia canis (strain Jake)).